The following is a 391-amino-acid chain: Argininosuccinate synthase (391 aa).

Residue 6–14 participates in ATP binding; the sequence is AYSGGLDTT. Tyrosine 84 is a binding site for L-citrulline. Glycine 114 is an ATP binding site. Residues threonine 116, asparagine 120, and aspartate 121 each contribute to the L-aspartate site. Asparagine 120 contacts L-citrulline. Arginine 124, serine 171, serine 180, glutamate 253, and tyrosine 265 together coordinate L-citrulline.

This sequence belongs to the argininosuccinate synthase family. Type 1 subfamily. Homotetramer.

The protein resides in the cytoplasm. It carries out the reaction L-citrulline + L-aspartate + ATP = 2-(N(omega)-L-arginino)succinate + AMP + diphosphate + H(+). The protein operates within amino-acid biosynthesis; L-arginine biosynthesis; L-arginine from L-ornithine and carbamoyl phosphate: step 2/3. In Saccharolobus solfataricus (strain ATCC 35092 / DSM 1617 / JCM 11322 / P2) (Sulfolobus solfataricus), this protein is Argininosuccinate synthase.